Reading from the N-terminus, the 635-residue chain is Chaperone protein HtpG (635 aa).

The tract at residues M1 to R344 is a; substrate-binding. The interval E345–K561 is b. Residues L562–H635 form a c region.

The protein belongs to the heat shock protein 90 family. In terms of assembly, homodimer.

The protein resides in the cytoplasm. In terms of biological role, molecular chaperone. Has ATPase activity. The sequence is that of Chaperone protein HtpG from Vibrio cholerae serotype O1 (strain ATCC 39541 / Classical Ogawa 395 / O395).